Consider the following 311-residue polypeptide: Methionyl-tRNA formyltransferase (311 aa).

(6S)-5,6,7,8-tetrahydrofolate is bound at residue 109 to 112 (SLLP).

It belongs to the Fmt family.

It catalyses the reaction L-methionyl-tRNA(fMet) + (6R)-10-formyltetrahydrofolate = N-formyl-L-methionyl-tRNA(fMet) + (6S)-5,6,7,8-tetrahydrofolate + H(+). In terms of biological role, attaches a formyl group to the free amino group of methionyl-tRNA(fMet). The formyl group appears to play a dual role in the initiator identity of N-formylmethionyl-tRNA by promoting its recognition by IF2 and preventing the misappropriation of this tRNA by the elongation apparatus. The polypeptide is Methionyl-tRNA formyltransferase (Acetivibrio thermocellus (strain ATCC 27405 / DSM 1237 / JCM 9322 / NBRC 103400 / NCIMB 10682 / NRRL B-4536 / VPI 7372) (Clostridium thermocellum)).